We begin with the raw amino-acid sequence, 237 residues long: Uridylate kinase (237 aa).

Residue 9 to 12 (KLSG) coordinates ATP. Positions 17–22 (GSQGYG) are involved in allosteric activation by GTP. Gly51 lines the UMP pocket. 2 residues coordinate ATP: Gly52 and Arg56. UMP-binding positions include Asp71 and 132 to 139 (CGNPFFTT). Residues Thr159, Tyr165, and Asp168 each contribute to the ATP site.

Belongs to the UMP kinase family. In terms of assembly, homohexamer.

Its subcellular location is the cytoplasm. It catalyses the reaction UMP + ATP = UDP + ADP. The protein operates within pyrimidine metabolism; CTP biosynthesis via de novo pathway; UDP from UMP (UMPK route): step 1/1. Its activity is regulated as follows. Allosterically activated by GTP. Inhibited by UTP. Functionally, catalyzes the reversible phosphorylation of UMP to UDP. In Synechococcus sp. (strain CC9605), this protein is Uridylate kinase.